Reading from the N-terminus, the 278-residue chain is Small ribosomal subunit protein uS2 (278 aa).

Positions 233-258 (IDMEAAGEAPANKGKKKSAKARLDKS) are disordered.

Belongs to the universal ribosomal protein uS2 family.

The protein is Small ribosomal subunit protein uS2 of Bacteroides fragilis (strain ATCC 25285 / DSM 2151 / CCUG 4856 / JCM 11019 / LMG 10263 / NCTC 9343 / Onslow / VPI 2553 / EN-2).